The following is a 545-amino-acid chain: Thermosome subunit (545 aa).

This sequence belongs to the TCP-1 chaperonin family. Forms an oligomeric complex of eight-membered rings.

Its function is as follows. Molecular chaperone; binds unfolded polypeptides in vitro, and has a weak ATPase activity. This chain is Thermosome subunit (ths), found in Desulfurococcus sp. (strain SY).